Consider the following 260-residue polypeptide: NAD kinase (260 aa).

The active-site Proton acceptor is the Asp49. Residues 49 to 50 (DG), 119 to 120 (NE), Asp149, Ala157, and 160 to 165 (TAYNLS) contribute to the NAD(+) site.

This sequence belongs to the NAD kinase family. It depends on a divalent metal cation as a cofactor.

Its subcellular location is the cytoplasm. The catalysed reaction is NAD(+) + ATP = ADP + NADP(+) + H(+). Functionally, involved in the regulation of the intracellular balance of NAD and NADP, and is a key enzyme in the biosynthesis of NADP. Catalyzes specifically the phosphorylation on 2'-hydroxyl of the adenosine moiety of NAD to yield NADP. This is NAD kinase from Caulobacter vibrioides (strain ATCC 19089 / CIP 103742 / CB 15) (Caulobacter crescentus).